The following is a 204-amino-acid chain: Holliday junction branch migration complex subunit RuvA (204 aa).

The interval methionine 1–isoleucine 63 is domain I. The segment at aspartate 64 to glycine 142 is domain II. Residues alanine 143 to valine 151 form a flexible linker region. The domain III stretch occupies residues alanine 152–lysine 204.

The protein belongs to the RuvA family. Homotetramer. Forms an RuvA(8)-RuvB(12)-Holliday junction (HJ) complex. HJ DNA is sandwiched between 2 RuvA tetramers; dsDNA enters through RuvA and exits via RuvB. An RuvB hexamer assembles on each DNA strand where it exits the tetramer. Each RuvB hexamer is contacted by two RuvA subunits (via domain III) on 2 adjacent RuvB subunits; this complex drives branch migration. In the full resolvosome a probable DNA-RuvA(4)-RuvB(12)-RuvC(2) complex forms which resolves the HJ.

It localises to the cytoplasm. The RuvA-RuvB-RuvC complex processes Holliday junction (HJ) DNA during genetic recombination and DNA repair, while the RuvA-RuvB complex plays an important role in the rescue of blocked DNA replication forks via replication fork reversal (RFR). RuvA specifically binds to HJ cruciform DNA, conferring on it an open structure. The RuvB hexamer acts as an ATP-dependent pump, pulling dsDNA into and through the RuvAB complex. HJ branch migration allows RuvC to scan DNA until it finds its consensus sequence, where it cleaves and resolves the cruciform DNA. In Corynebacterium efficiens (strain DSM 44549 / YS-314 / AJ 12310 / JCM 11189 / NBRC 100395), this protein is Holliday junction branch migration complex subunit RuvA.